Here is an 88-residue protein sequence, read N- to C-terminus: Small ribosomal subunit protein bS18 (88 aa).

The span at 1-11 shows a compositional bias: low complexity; that stretch reads MTTANTTAKDN. Residues 1–21 are disordered; that stretch reads MTTANTTAKDNAATKKRGRKA.

This sequence belongs to the bacterial ribosomal protein bS18 family. Part of the 30S ribosomal subunit. Forms a tight heterodimer with protein bS6.

Binds as a heterodimer with protein bS6 to the central domain of the 16S rRNA, where it helps stabilize the platform of the 30S subunit. This chain is Small ribosomal subunit protein bS18, found in Thermoanaerobacter pseudethanolicus (strain ATCC 33223 / 39E) (Clostridium thermohydrosulfuricum).